A 219-amino-acid polypeptide reads, in one-letter code: Ribose-5-phosphate isomerase A (219 aa).

Residues 28-31 (SGST), 81-84 (DGAD), and 94-97 (KGGG) contribute to the substrate site. The active-site Proton acceptor is E103. K121 serves as a coordination point for substrate.

The protein belongs to the ribose 5-phosphate isomerase family. Homodimer.

It carries out the reaction aldehydo-D-ribose 5-phosphate = D-ribulose 5-phosphate. It participates in carbohydrate degradation; pentose phosphate pathway; D-ribose 5-phosphate from D-ribulose 5-phosphate (non-oxidative stage): step 1/1. Functionally, catalyzes the reversible conversion of ribose-5-phosphate to ribulose 5-phosphate. This chain is Ribose-5-phosphate isomerase A, found in Haemophilus influenzae (strain PittEE).